Consider the following 202-residue polypeptide: ATP-dependent Clp protease proteolytic subunit 1 (202 aa).

The active-site Nucleophile is the Ser-101. The active site involves His-126.

It belongs to the peptidase S14 family. In terms of assembly, fourteen ClpP subunits assemble into 2 heptameric rings which stack back to back to give a disk-like structure with a central cavity, resembling the structure of eukaryotic proteasomes.

The protein localises to the cytoplasm. It catalyses the reaction Hydrolysis of proteins to small peptides in the presence of ATP and magnesium. alpha-casein is the usual test substrate. In the absence of ATP, only oligopeptides shorter than five residues are hydrolyzed (such as succinyl-Leu-Tyr-|-NHMec, and Leu-Tyr-Leu-|-Tyr-Trp, in which cleavage of the -Tyr-|-Leu- and -Tyr-|-Trp bonds also occurs).. In terms of biological role, cleaves peptides in various proteins in a process that requires ATP hydrolysis. Has a chymotrypsin-like activity. Plays a major role in the degradation of misfolded proteins. This Rhizobium etli (strain ATCC 51251 / DSM 11541 / JCM 21823 / NBRC 15573 / CFN 42) protein is ATP-dependent Clp protease proteolytic subunit 1.